A 184-amino-acid polypeptide reads, in one-letter code: Tumor necrosis factor alpha-induced protein 8-like protein 2 (184 aa).

Position 3 is a phosphoserine (serine 3).

This sequence belongs to the TNFAIP8 family. TNFAIP8L2 subfamily. May interact with CASP8; however, such result is unclear since could not reproduce the interaction with CASP8. Interacts with RAC1. Post-translationally, phosphorylated by TAK1/MAP3K7; this phosphorylation triggers association with BTRC and subsequent ubiquitination and degradation. In terms of processing, ubiquitinated in a BTRC-depdent manner; leading to degradation mediated through the proteasome pathway. As to expression, expressed in thymus, spleen, lymph node and small intestine, but not in liver, heart, muscle, testis, spinal cord or brain. Up-regulated in the spinal cord of mice with experimental autoimmune encephalomyelitis. Constitutively expressed by macrophages, B and T-lymphocytes at various developmental stages.

The protein localises to the cytoplasm. Its subcellular location is the nucleus. The protein resides in the lysosome. Acts as a negative regulator of innate and adaptive immunity by maintaining immune homeostasis. Plays a regulatory role in the Toll-like signaling pathway by determining the strength of LPS-induced signaling and gene expression. Inhibits TCR-mediated T-cell activation and negatively regulate T-cell function to prevent hyperresponsiveness. Also inhibits autolysosome formation via negatively modulating MTOR activation by interacting with RAC1 and promoting the disassociation of the RAC1-MTOR complex. Plays an essential role in NK-cell biology by acting as a checkpoint and displaying an expression pattern correlating with NK-cell maturation process and by negatively regulating NK-cell maturation and antitumor immunity. Mechanistically, suppresses IL-15-triggered mTOR activity in NK-cells. The chain is Tumor necrosis factor alpha-induced protein 8-like protein 2 (Tnfaip8l2) from Mus musculus (Mouse).